Consider the following 89-residue polypeptide: Small ribosomal subunit protein uS15 (89 aa).

Belongs to the universal ribosomal protein uS15 family. In terms of assembly, part of the 30S ribosomal subunit. Forms a bridge to the 50S subunit in the 70S ribosome, contacting the 23S rRNA.

Functionally, one of the primary rRNA binding proteins, it binds directly to 16S rRNA where it helps nucleate assembly of the platform of the 30S subunit by binding and bridging several RNA helices of the 16S rRNA. In terms of biological role, forms an intersubunit bridge (bridge B4) with the 23S rRNA of the 50S subunit in the ribosome. The protein is Small ribosomal subunit protein uS15 of Caulobacter sp. (strain K31).